The chain runs to 226 residues: Enolase-phosphatase E1 (226 aa).

It belongs to the HAD-like hydrolase superfamily. MasA/MtnC family. Monomer. Mg(2+) serves as cofactor.

It carries out the reaction 5-methylsulfanyl-2,3-dioxopentyl phosphate + H2O = 1,2-dihydroxy-5-(methylsulfanyl)pent-1-en-3-one + phosphate. Its pathway is amino-acid biosynthesis; L-methionine biosynthesis via salvage pathway; L-methionine from S-methyl-5-thio-alpha-D-ribose 1-phosphate: step 3/6. It participates in amino-acid biosynthesis; L-methionine biosynthesis via salvage pathway; L-methionine from S-methyl-5-thio-alpha-D-ribose 1-phosphate: step 4/6. Its function is as follows. Bifunctional enzyme that catalyzes the enolization of 2,3-diketo-5-methylthiopentyl-1-phosphate (DK-MTP-1-P) into the intermediate 2-hydroxy-3-keto-5-methylthiopentenyl-1-phosphate (HK-MTPenyl-1-P), which is then dephosphorylated to form the acireductone 1,2-dihydroxy-3-keto-5-methylthiopentene (DHK-MTPene). In Shewanella baltica (strain OS155 / ATCC BAA-1091), this protein is Enolase-phosphatase E1.